Here is a 366-residue protein sequence, read N- to C-terminus: Elongation factor Ts, mitochondrial (366 aa).

A mitochondrion-targeting transit peptide spans 1-50; that stretch reads MAWSQSARKPMIGLLFRAQQHSARGYSYSAFQAHLSSSNVDQSATLLRRF.

Belongs to the EF-Ts family.

It is found in the mitochondrion. Associates with the EF-Tu.GDP complex and induces the exchange of GDP to GTP. It remains bound to the aminoacyl-tRNA.EF-Tu.GTP complex up to the GTP hydrolysis stage on the ribosome. The polypeptide is Elongation factor Ts, mitochondrial (Oryza sativa subsp. japonica (Rice)).